The following is a 333-amino-acid chain: NADH-quinone oxidoreductase subunit H (333 aa).

Helical transmembrane passes span phenylalanine 15 to tyrosine 35, phenylalanine 88 to phenylalanine 108, isoleucine 117 to threonine 137, isoleucine 159 to leucine 179, valine 191 to glutamate 211, tryptophan 239 to valine 259, isoleucine 274 to valine 296, and valine 313 to phenylalanine 333.

Belongs to the complex I subunit 1 family. NDH-1 is composed of 14 different subunits. Subunits NuoA, H, J, K, L, M, N constitute the membrane sector of the complex.

The protein resides in the cell membrane. The catalysed reaction is a quinone + NADH + 5 H(+)(in) = a quinol + NAD(+) + 4 H(+)(out). In terms of biological role, NDH-1 shuttles electrons from NADH, via FMN and iron-sulfur (Fe-S) centers, to quinones in the respiratory chain. The immediate electron acceptor for the enzyme in this species is believed to be ubiquinone. Couples the redox reaction to proton translocation (for every two electrons transferred, four hydrogen ions are translocated across the cytoplasmic membrane), and thus conserves the redox energy in a proton gradient. This subunit may bind ubiquinone. The protein is NADH-quinone oxidoreductase subunit H of Bacillus cereus (strain G9842).